A 180-amino-acid chain; its full sequence is Large ribosomal subunit protein uL6 (180 aa).

Belongs to the universal ribosomal protein uL6 family. In terms of assembly, part of the 50S ribosomal subunit.

Functionally, this protein binds to the 23S rRNA, and is important in its secondary structure. It is located near the subunit interface in the base of the L7/L12 stalk, and near the tRNA binding site of the peptidyltransferase center. The protein is Large ribosomal subunit protein uL6 of Borrelia recurrentis (strain A1).